Consider the following 541-residue polypeptide: Solute carrier family 22 member 10 (541 aa).

The Cytoplasmic portion of the chain corresponds to 1–15 (MAFEELLSQVGGLGR). A helical membrane pass occupies residues 16–36 (FQMLHLVFILPSLMLLIPHIL). The Extracellular portion of the chain corresponds to 37-145 (LENFAAAIPG…DLVCDYQSLK (109 aa)). N-linked (GlcNAc...) asparagine glycosylation is found at asparagine 56 and asparagine 102. Residues 146–166 (SVVQFLLLTGMLVGGIIGGHV) form a helical membrane-spanning segment. Residues 167-193 (SDRFGRRFILRWCLLQLAITDTCAAFA) lie on the Cytoplasmic side of the membrane. The chain crosses the membrane as a helical span at residues 194 to 214 (PTFPVYCVLRFLAGFSSMIII). At 215-230 (SNNSLPITEWIRPNSK) the chain is on the extracellular side. The helical transmembrane segment at 231 to 251 (ALVVILSSGALSIGQIILGGL) threads the bilayer. Residues 252-259 (AYVFRDWQ) are Cytoplasmic-facing. A helical transmembrane segment spans residues 260–280 (TLHVVASVPFFVFFLLSRWLV). The Extracellular segment spans residues 281–349 (ESARWLIITN…LFRNPSMRKR (69 aa)). The chain crosses the membrane as a helical span at residues 350 to 370 (ICILVFLRFANTIPFYGTMVN). Residues 371 to 377 (LQHVGSN) lie on the Cytoplasmic side of the membrane. A helical transmembrane segment spans residues 378–398 (IFLLQVLYGAVALIVRCLALL). Residues 399–406 (TLNHMGRR) are Extracellular-facing. Residues 407-427 (ISQILFMFLVGLSILANTFVP) form a helical membrane-spanning segment. The Cytoplasmic segment spans residues 428–436 (KEMQTLRVA). The helical transmembrane segment at 437 to 457 (LACLGIGCSAATFSSVAVHFI) threads the bilayer. The Extracellular segment spans residues 458–472 (ELIPTVLRARASGID). Residues 473 to 493 (LTASRIGAALAPLLMTLTVFF) traverse the membrane as a helical segment. The Cytoplasmic portion of the chain corresponds to 494–495 (TT). The chain crosses the membrane as a helical span at residues 496 to 516 (LPWIIYGIFPIIGGLIVFLLP). The Extracellular segment spans residues 517–541 (ETKNLPLPDTIKDVENQKKNLKEKA).

It belongs to the major facilitator (TC 2.A.1) superfamily. Organic cation transporter (TC 2.A.1.19) family. In terms of tissue distribution, detected in fetal and adult liver, and in adult kidney.

The protein localises to the membrane. This is Solute carrier family 22 member 10 (SLC22A10) from Homo sapiens (Human).